The sequence spans 400 residues: MNEPFTHAIPILHTLHEHGYQAYFVGGAVRDVLLGREIGDIDIATDATPDTVESLFEKTVDVGKEHGTVIVLHDGMSYEVTTFRTESEYEDFRRPKEVAFITSLKEDLLRRDLTINAMAMDINGEIIDHVGGKQDIERKRIQTVGDPACRFQEDALRMMRAIRFLSQLGFELAAETAEAMEKDKHLLANISVERKKIEMEKLLKGRYCERAIKVLISTKLYEELPGLEKDRLQDSFQTFPYYLLDGLEEVWGAVIHLLGLDEEKAVLFLKEWKLSTKLLKDAVAISRYVDCEWNAEKMFEAGEHVLLSSLKITQLKHERRIFFDELEAAKSSYDALPIKTLQDLAVSGKDLMAFRQKTSGKWIAEELDLVKKAVLHNHLENRKEAIEEWLTACDQQLEND.

Positions 27 and 30 each coordinate ATP. Positions 27 and 30 each coordinate CTP. Residues Asp40 and Asp42 each contribute to the Mg(2+) site. The ATP site is built by Arg111, Asp154, Arg157, Arg160, and Arg163. Arg111, Asp154, Arg157, Arg160, and Arg163 together coordinate CTP.

Belongs to the tRNA nucleotidyltransferase/poly(A) polymerase family. Bacterial CCA-adding enzyme type 3 subfamily. As to quaternary structure, homodimer. Requires Mg(2+) as cofactor.

It catalyses the reaction a tRNA precursor + 2 CTP + ATP = a tRNA with a 3' CCA end + 3 diphosphate. The catalysed reaction is a tRNA with a 3' CCA end + 2 CTP + ATP = a tRNA with a 3' CCACCA end + 3 diphosphate. Its function is as follows. Catalyzes the addition and repair of the essential 3'-terminal CCA sequence in tRNAs without using a nucleic acid template. Adds these three nucleotides in the order of C, C, and A to the tRNA nucleotide-73, using CTP and ATP as substrates and producing inorganic pyrophosphate. tRNA 3'-terminal CCA addition is required both for tRNA processing and repair. Also involved in tRNA surveillance by mediating tandem CCA addition to generate a CCACCA at the 3' terminus of unstable tRNAs. While stable tRNAs receive only 3'-terminal CCA, unstable tRNAs are marked with CCACCA and rapidly degraded. The protein is CCA-adding enzyme of Bacillus pumilus (strain SAFR-032).